The chain runs to 152 residues: Cuticle protein 64 (152 aa).

A run of 7 repeats spans residues 27–30 (AAPA), 33–37 (AAPAV), 39–42 (AAPA), 86–89 (AAPV), 92–95 (AAPA), 98–101 (AAPA), and 127–130 (AAPA).

Component of the cuticle of migratory locust which contains more than 100 different structural proteins. The sequence is that of Cuticle protein 64 from Locusta migratoria (Migratory locust).